A 473-amino-acid chain; its full sequence is Photosystem II CP43 reaction center protein (473 aa).

A propeptide spanning residues 1-14 (MKTLYSLRRFYHVE) is cleaved from the precursor. The residue at position 15 (Thr-15) is an N-acetylthreonine. The residue at position 15 (Thr-15) is a Phosphothreonine. Helical transmembrane passes span 69-93 (LFEV…PHLA), 134-155 (LLGP…KDRN), 178-200 (KASY…RKIT), 255-275 (KPFA…LSYS), and 291-312 (WFNN…ASQA). Glu-367 is a [CaMn4O5] cluster binding site. The chain crosses the membrane as a helical span at residues 447 to 471 (RARAAAAGFEKGIDRDFEPVLSMTP).

This sequence belongs to the PsbB/PsbC family. PsbC subfamily. In terms of assembly, PSII is composed of 1 copy each of membrane proteins PsbA, PsbB, PsbC, PsbD, PsbE, PsbF, PsbH, PsbI, PsbJ, PsbK, PsbL, PsbM, PsbT, PsbX, PsbY, PsbZ, Psb30/Ycf12, at least 3 peripheral proteins of the oxygen-evolving complex and a large number of cofactors. It forms dimeric complexes. Binds multiple chlorophylls and provides some of the ligands for the Ca-4Mn-5O cluster of the oxygen-evolving complex. It may also provide a ligand for a Cl- that is required for oxygen evolution. PSII binds additional chlorophylls, carotenoids and specific lipids. serves as cofactor.

The protein localises to the plastid. The protein resides in the chloroplast thylakoid membrane. One of the components of the core complex of photosystem II (PSII). It binds chlorophyll and helps catalyze the primary light-induced photochemical processes of PSII. PSII is a light-driven water:plastoquinone oxidoreductase, using light energy to abstract electrons from H(2)O, generating O(2) and a proton gradient subsequently used for ATP formation. In Cicer arietinum (Chickpea), this protein is Photosystem II CP43 reaction center protein.